Here is a 334-residue protein sequence, read N- to C-terminus: Protein-methionine-sulfoxide reductase catalytic subunit MsrP (334 aa).

Residues 1–44 (MKKNQFLKESDVTAESVFFMTRRQVLKALGISAAALSLPHAAHA) constitute a signal peptide (tat-type signal). Residues asparagine 88, 91–92 (YE), cysteine 146, threonine 181, asparagine 233, arginine 238, and 249–251 (GIK) contribute to the Mo-molybdopterin site.

The protein belongs to the MsrP family. Heterodimer of a catalytic subunit (MsrP) and a heme-binding subunit (MsrQ). Mo-molybdopterin is required as a cofactor. In terms of processing, predicted to be exported by the Tat system. The position of the signal peptide cleavage has not been experimentally proven.

It localises to the periplasm. It catalyses the reaction L-methionyl-[protein] + a quinone + H2O = L-methionyl-(S)-S-oxide-[protein] + a quinol. It carries out the reaction L-methionyl-[protein] + a quinone + H2O = L-methionyl-(R)-S-oxide-[protein] + a quinol. Part of the MsrPQ system that repairs oxidized periplasmic proteins containing methionine sulfoxide residues (Met-O), using respiratory chain electrons. Thus protects these proteins from oxidative-stress damage caused by reactive species of oxygen and chlorine generated by the host defense mechanisms. MsrPQ is essential for the maintenance of envelope integrity under bleach stress, rescuing a wide series of structurally unrelated periplasmic proteins from methionine oxidation, including the primary periplasmic chaperone SurA and the lipoprotein Pal. The catalytic subunit MsrP is non-stereospecific, being able to reduce both (R-) and (S-) diastereoisomers of methionine sulfoxide. The sequence is that of Protein-methionine-sulfoxide reductase catalytic subunit MsrP from Escherichia coli (strain 55989 / EAEC).